The chain runs to 102 residues: uncharacterized protein (102 aa).

Residues Met1 to Ala22 form the signal peptide. The N-palmitoyl cysteine moiety is linked to residue Cys23. A lipid anchor (S-diacylglycerol cysteine) is attached at Cys23.

Belongs to the MG185/MG260 family.

It localises to the cell membrane. This is an uncharacterized protein from Mycoplasma pneumoniae (strain ATCC 29342 / M129 / Subtype 1) (Mycoplasmoides pneumoniae).